A 448-amino-acid polypeptide reads, in one-letter code: MKSSVEKLSETRVKLNVEVPFEELKPEIDQAYKALAQQITIPGFRRGKAPRQLIDARIGRGAVLEQVINDMLPTRYQQVVEENELVVLGQPHIDITKLEDNEVVEFTAEVDVRPEITVPDFSAFAVEVPALKSNDEAIDAQIDKLRERFGELKDTKRKLKTDDFAIIDIEAAIDGEKLEEATTEGMSYQVGAGDLIDGLDTALRGLKAGESAEFTTTLKAGEHEGKEAAVTVTVQQTKERKLPELDEEFVQTASEFDTVEELRESIAEQVAEQAKAEQATAIRDEVLKAALAEATFELPEGVVEDQIHAQLHQLLNQVGGDEAALNAALEAQGTSREQFDADNRKNSEEAVRTQLFLDALAEQEQPEVSQQELTDHILFTAQSYGMDPNQFITQLQQSGQIGNLFSDVRRGKALAAAICRVSVKDDEGKAVDPSEYFGEEEESAEESE.

Residues 162-243 (DDFAIIDIEA…VQQTKERKLP (82 aa)) form the PPIase FKBP-type domain. Residues 426–448 (DEGKAVDPSEYFGEEEESAEESE) are disordered. Acidic residues predominate over residues 437–448 (FGEEEESAEESE).

This sequence belongs to the FKBP-type PPIase family. Tig subfamily.

It is found in the cytoplasm. It catalyses the reaction [protein]-peptidylproline (omega=180) = [protein]-peptidylproline (omega=0). Functionally, involved in protein export. Acts as a chaperone by maintaining the newly synthesized protein in an open conformation. Functions as a peptidyl-prolyl cis-trans isomerase. In Corynebacterium diphtheriae (strain ATCC 700971 / NCTC 13129 / Biotype gravis), this protein is Trigger factor.